A 589-amino-acid polypeptide reads, in one-letter code: MFLSLCLMVLALYLLYKWALPKPISSIPYNPPALQSLFGDIPAMIQGTKANNQTHMDWIIQQMKNHESPIIQLFLSPLQRPTVILADFRETQDIMLRRKDFDRSTNIRGLLEDVIPDHHIYEQTNSVFRTHRKLVQDVMLPSFIQKVAGPAFHSNIMRLVRVWDLKAQIADGSPFLATQDIQGAVLDAVYSFAFGSYYKSSTTLPKIEKLEKWNGNAENSSRNAPQSDKPFDFPDVAFDDLINATIDLAKAPQGLQGSPIAKLQAKVTMNMPHFRRVRKIRDDFLRGSLKSAVSKLPSEGGKSDSQAVTSAVEQMVLRETALAQTENRSPNYFSTMMQGELFGLILGGFDTTSTTTLWGLKFLTDNASVQKRLRQALQSSFTKAKAENRSPTFQELAVARIPYLEAVIEEILRCAGATPALQRLAKVDTQILGYHIPKGTDVLFLTHGPSVWTPGFEIDESRRSQTCQAAGEKKDQCWESHDISKFKPERWLGQKLPSNNREKDTDATETAEEFDGLAGPTLAFGLGTRGCFGRRLGYQQLKTSITILIWNFELLPCPQELSSYRTIEGLTSMPEHSYISLAKVDLTTT.

A signal peptide spans 1-21 (MFLSLCLMVLALYLLYKWALP). Residues asparagine 52, asparagine 219, asparagine 243, and asparagine 366 are each glycosylated (N-linked (GlcNAc...) asparagine). Cysteine 531 lines the heme pocket.

The protein belongs to the cytochrome P450 family. Heme is required as a cofactor.

Its pathway is sesquiterpene biosynthesis; trichothecene biosynthesis. In terms of biological role, cytochrome P450 monooxygenase; part of the core gene cluster that mediates the biosynthesis of trichothecenes, a very large family of chemically related bicyclic sesquiterpene compounds acting as mycotoxins, including T2-toxin. The biosynthesis of trichothecenes begins with the cyclization of farnesyl diphosphate to trichodiene and is catalyzed by the trichodiene synthase TRI5. Trichodiene undergoes a series of oxygenations catalyzed by the cytochrome P450 monooxygenase TRI4. TRI4 controls the addition of four oxygens at C-2, C-3, C-11, and the C-12, C-13-epoxide to form the intermediate isotrichotriol. Isotrichotriol then undergoes a non-enzymatic isomerization and cyclization to form isotrichodermol. During this process, the oxygen at the C-2 position becomes the pyran ring oxygen and the hydroxyl group at C-11 is lost. More complex type A trichothecenes are built by modifying isotrichodermol through a series of paired hydroxylation and acetylation or acylation steps. Isotrichodermol is converted to isotrichodermin by the acetyltransferase TRI101. TRI101 encodes a C-3 transacetylase that acts as a self-protection or resistance factor during biosynthesis and that the presence of a free C-3 hydroxyl group is a key component of Fusarium trichothecene phytotoxicity. A second hydroxyl group is added to C-15 by the trichothecene C-15 hydroxylase TRI11, producing 15-decalonectrin, which is then acetylated by TRI3, producing calonectrin. A third hydroxyl group is added at C-4 by the cytochrome P450 monooxygenase TRI13, converting calonectrin to 3,15-diacetoxyspirpenol, which is subsequently acetylated by the acetyltransferase TRI7. A fourth hydroxyl group is added to C-8 by the cytochrome P450 monooxygenase TRI1, followed by the addition of an isovaleryl moiety by TRI16. Finally, the acetyl group is removed from the C-3 position by the trichothecene C-3 esterase TRI8 to produce T-2 toxin. This Fusarium sporotrichioides protein is Cytochrome P450 monooxygenase TRI13.